Here is a 310-residue protein sequence, read N- to C-terminus: Repression factor of MSEs protein 1 (310 aa).

Disordered stretches follow at residues 83-155 (TQEV…EANA) and 192-230 (DGIR…DEGE). Over residues 92 to 106 (RNTSSSSSSTRSNSS) the composition is skewed to low complexity. Over residues 107–120 (ADISDTEYSGENTP) the composition is skewed to polar residues. The segment covering 127 to 136 (SRRRRTRSRA) has biased composition (basic residues). Polar residues predominate over residues 139 to 155 (RENSLPASLPSISEANA). Over residues 192 to 208 (DGIRRRSSRISERDKRR) the composition is skewed to basic and acidic residues. Ser215 bears the Phosphoserine mark.

As to quaternary structure, interacts directly with HST1 and SUM1. Required for the interaction between HST1 and SUM1.

It localises to the nucleus. Tethering factor required for histone deacetylase HST1-mediated repression. Probably involved in targeting HST1 to a subset of SUM1-regulated genes. The polypeptide is Repression factor of MSEs protein 1 (RFM1) (Saccharomyces cerevisiae (strain ATCC 204508 / S288c) (Baker's yeast)).